Consider the following 143-residue polypeptide: Large ribosomal subunit protein uL11 (143 aa).

This sequence belongs to the universal ribosomal protein uL11 family. Part of the ribosomal stalk of the 50S ribosomal subunit. Interacts with L10 and the large rRNA to form the base of the stalk. L10 forms an elongated spine to which L12 dimers bind in a sequential fashion forming a multimeric L10(L12)X complex. In terms of processing, one or more lysine residues are methylated.

Forms part of the ribosomal stalk which helps the ribosome interact with GTP-bound translation factors. This is Large ribosomal subunit protein uL11 from Phenylobacterium zucineum (strain HLK1).